The sequence spans 214 residues: Probable adenylyl-sulfate kinase (214 aa).

13-20 (GLSGAGKT) contributes to the ATP binding site. The active-site Phosphoserine intermediate is Ser87. A disordered region spans residues 174–199 (WNRTNTFPLKSRPNPPHRHKSKSSRA).

It belongs to the APS kinase family.

It carries out the reaction adenosine 5'-phosphosulfate + ATP = 3'-phosphoadenylyl sulfate + ADP + H(+). It functions in the pathway sulfur metabolism; hydrogen sulfide biosynthesis; sulfite from sulfate: step 2/3. Functionally, catalyzes the synthesis of activated sulfate. The polypeptide is Probable adenylyl-sulfate kinase (Pseudomonas aeruginosa).